The chain runs to 77 residues: Large ribosomal subunit protein uL24 (77 aa).

The protein belongs to the universal ribosomal protein uL24 family. Part of the 50S ribosomal subunit.

Its function is as follows. One of two assembly initiator proteins, it binds directly to the 5'-end of the 23S rRNA, where it nucleates assembly of the 50S subunit. One of the proteins that surrounds the polypeptide exit tunnel on the outside of the subunit. The polypeptide is Large ribosomal subunit protein uL24 (Campylobacter fetus subsp. fetus (strain 82-40)).